The primary structure comprises 130 residues: Large ribosomal subunit protein bL19 (130 aa).

This sequence belongs to the bacterial ribosomal protein bL19 family.

In terms of biological role, this protein is located at the 30S-50S ribosomal subunit interface and may play a role in the structure and function of the aminoacyl-tRNA binding site. The protein is Large ribosomal subunit protein bL19 of Burkholderia lata (strain ATCC 17760 / DSM 23089 / LMG 22485 / NCIMB 9086 / R18194 / 383).